Reading from the N-terminus, the 277-residue chain is 2,3,4,5-tetrahydropyridine-2,6-dicarboxylate N-succinyltransferase (277 aa).

Substrate contacts are provided by Arg106 and Asp143.

It belongs to the transferase hexapeptide repeat family. Homotrimer.

Its subcellular location is the cytoplasm. It carries out the reaction (S)-2,3,4,5-tetrahydrodipicolinate + succinyl-CoA + H2O = (S)-2-succinylamino-6-oxoheptanedioate + CoA. Its pathway is amino-acid biosynthesis; L-lysine biosynthesis via DAP pathway; LL-2,6-diaminopimelate from (S)-tetrahydrodipicolinate (succinylase route): step 1/3. In Xylella fastidiosa (strain Temecula1 / ATCC 700964), this protein is 2,3,4,5-tetrahydropyridine-2,6-dicarboxylate N-succinyltransferase.